Reading from the N-terminus, the 145-residue chain is Probable transport accessory protein MmpS2 (145 aa).

The chain crosses the membrane as a helical span at residues M11–L31.

Belongs to the MmpS family.

It localises to the cell membrane. This is Probable transport accessory protein MmpS2 (mmpS2) from Mycobacterium bovis (strain ATCC BAA-935 / AF2122/97).